The sequence spans 360 residues: Cannabinoid receptor 2 (360 aa).

Residues 1–33 (MEECWVTEIANGSKDGLDSNPMKDYMILSGPQK) are Extracellular-facing. N11 carries an N-linked (GlcNAc...) asparagine glycan. Residues 34-59 (TAVAVLCTLLGLLSALENVAVLYLIL) traverse the membrane as a helical segment. At 60–71 (SSHQLRRKPSYL) the chain is on the cytoplasmic side. The chain crosses the membrane as a helical span at residues 72-92 (FIGSLAGADFLASVVFACSFV). At 93–104 (NFHVFHGVDSKA) the chain is on the extracellular side. Residues 105–129 (VFLLKIGSVTMTFTASVGSLLLTAI) form a helical membrane-spanning segment. The Cytoplasmic segment spans residues 130–149 (DRYLCLRYPPSYKALLTRGR). The helical transmembrane segment at 150 to 172 (ALVTLGIMWVLSALVSYLPLMGW) threads the bilayer. Residues 173-188 (TCCPRPCSELFPLIPN) lie on the Extracellular side of the membrane. A helical membrane pass occupies residues 189 to 214 (DYLLSWLLFIAFLFSGIIYTYGHVLW). Residues 215 to 246 (KAHQHVASLSGHQDRQVPGMARMRLDVRLAKT) lie on the Cytoplasmic side of the membrane. A helical membrane pass occupies residues 247–267 (LGLVLAVLLICWFPVLALMAH). Residues 268–279 (SLATTLSDQVKK) are Extracellular-facing. Residues 280 to 301 (AFAFCSMLCLINSMVNPVIYAL) form a helical membrane-spanning segment. The Cytoplasmic portion of the chain corresponds to 302-360 (RSGEIRSSAHHCLAHWKKCVRGLGSEAKEEAPRSSVTETEADGKITPWPDSRDLDLSDC). Positions 327–360 (EAKEEAPRSSVTETEADGKITPWPDSRDLDLSDC) are disordered. Residues S335 and S336 each carry the phosphoserine modification. Phosphothreonine is present on T338. Residues 351-360 (DSRDLDLSDC) are compositionally biased toward basic and acidic residues. A Phosphoserine modification is found at S352.

This sequence belongs to the G-protein coupled receptor 1 family. In terms of processing, constitutively phosphorylated on Ser-352; phosphorylation increases cell internalization and desensitizes the receptor. As to expression, preferentially expressed in cells of the immune system with higher expression in B-cells and NK cells (at protein level). Expressed in skin in suprabasal layers and hair follicles (at protein level). Highly expressed in tonsil and to a lower extent in spleen, peripheral blood mononuclear cells, and thymus. PubMed:14657172 could not detect expression in normal brain. Expressed in brain by perivascular microglial cells and dorsal root ganglion sensory neurons (at protein level). Two isoforms are produced by alternative promoter usage and differ only in the 5' UTR: isoform CB2A is observed predominantly in testis with some expression in brain, while isoform CB2B is predominant in spleen and leukocytes.

The protein resides in the cell membrane. It is found in the cell projection. Its subcellular location is the dendrite. It localises to the perikaryon. Its function is as follows. Heterotrimeric G protein-coupled receptor for endocannabinoid 2-arachidonoylglycerol mediating inhibition of adenylate cyclase. May function in inflammatory response, nociceptive transmission and bone homeostasis. This is Cannabinoid receptor 2 (CNR2) from Homo sapiens (Human).